The sequence spans 504 residues: Maturase K (504 aa).

The protein belongs to the intron maturase 2 family. MatK subfamily.

It is found in the plastid. Its subcellular location is the chloroplast. Functionally, usually encoded in the trnK tRNA gene intron. Probably assists in splicing its own and other chloroplast group II introns. The sequence is that of Maturase K from Barbarea vulgaris (Yellow rocket).